A 342-amino-acid polypeptide reads, in one-letter code: L-lysine 2,3-aminomutase (342 aa).

Residues 106-329 (HKYHNRALLL…PKLAREIGGE (224 aa)) form the Radical SAM core domain. 3 residues coordinate [4Fe-4S] cluster: C120, C124, and C127. An N6-(pyridoxal phosphate)lysine modification is found at K332.

Belongs to the radical SAM superfamily. KamA family. The cofactor is [4Fe-4S] cluster. Requires pyridoxal 5'-phosphate as cofactor.

It catalyses the reaction L-lysine = D-beta-lysine. Functionally, with EpmA is involved in the beta-lysylation step of the post-translational modification of translation elongation factor P (EF-P) on 'Lys-34'. EpmB appears to act before EpmA. Displays lysine 2,3-aminomutase activity, producing (R)-beta-lysine from (S)-alpha-lysine (L-lysine). Cannot use (S)-ornithine or (R)-alpha-lysine as a substrate. The protein is L-lysine 2,3-aminomutase (epmB) of Escherichia coli (strain K12).